Consider the following 599-residue polypeptide: NADH-quinone oxidoreductase subunit C/D (599 aa).

Residues 1 to 189 are NADH dehydrogenase I subunit C; that stretch reads MTELMTQNSA…DPFVLTKQKE (189 aa). The tract at residues 213–599 is NADH dehydrogenase I subunit D; the sequence is DFMFLNLGPN…IDFVMSDVDR (387 aa).

In the N-terminal section; belongs to the complex I 30 kDa subunit family. The protein in the C-terminal section; belongs to the complex I 49 kDa subunit family. NDH-1 is composed of 13 different subunits. Subunits NuoB, CD, E, F, and G constitute the peripheral sector of the complex.

Its subcellular location is the cell inner membrane. It catalyses the reaction a quinone + NADH + 5 H(+)(in) = a quinol + NAD(+) + 4 H(+)(out). In terms of biological role, NDH-1 shuttles electrons from NADH, via FMN and iron-sulfur (Fe-S) centers, to quinones in the respiratory chain. The immediate electron acceptor for the enzyme in this species is believed to be ubiquinone. Couples the redox reaction to proton translocation (for every two electrons transferred, four hydrogen ions are translocated across the cytoplasmic membrane), and thus conserves the redox energy in a proton gradient. In Sodalis glossinidius (strain morsitans), this protein is NADH-quinone oxidoreductase subunit C/D.